We begin with the raw amino-acid sequence, 204 residues long: uncharacterized protein (204 aa).

This is an uncharacterized protein from Dictyostelium discoideum (Social amoeba).